The sequence spans 299 residues: Epimerase family protein SERP0438 (299 aa).

The protein belongs to the NAD(P)-dependent epimerase/dehydratase family. SDR39U1 subfamily.

The polypeptide is Epimerase family protein SERP0438 (Staphylococcus epidermidis (strain ATCC 35984 / DSM 28319 / BCRC 17069 / CCUG 31568 / BM 3577 / RP62A)).